Here is a 328-residue protein sequence, read N- to C-terminus: dITP/XTP pyrophosphatase (328 aa).

The interval Met-1–Ile-129 is unknown. Residues Ile-130–Gln-324 are NTP pyrophosphatase. Thr-134–Lys-139 provides a ligand contact to substrate. Catalysis depends on Asp-196, which acts as the Proton acceptor. Asp-196 contacts Mg(2+). Substrate contacts are provided by residues Ser-197, Phe-280 to Asp-283, Lys-303, and His-308 to Arg-309.

This sequence belongs to the HAM1 NTPase family. As to quaternary structure, homodimer. The cofactor is Mg(2+).

The catalysed reaction is XTP + H2O = XMP + diphosphate + H(+). The enzyme catalyses dITP + H2O = dIMP + diphosphate + H(+). It catalyses the reaction ITP + H2O = IMP + diphosphate + H(+). Pyrophosphatase that catalyzes the hydrolysis of nucleoside triphosphates to their monophosphate derivatives, with a high preference for the non-canonical purine nucleotides XTP (xanthosine triphosphate), dITP (deoxyinosine triphosphate) and ITP. Seems to function as a house-cleaning enzyme that removes non-canonical purine nucleotides from the nucleotide pool, thus preventing their incorporation into DNA/RNA and avoiding chromosomal lesions. The chain is dITP/XTP pyrophosphatase from Streptococcus pyogenes serotype M1.